The following is a 316-amino-acid chain: WSCD family member GA21586 (316 aa).

A helical transmembrane segment spans residues 8–28 (FFGVSATIIIYIGGVLFLSMN). N-linked (GlcNAc...) asparagine glycans are attached at residues N78, N150, N226, and N232.

The protein belongs to the WSCD family.

The protein localises to the membrane. This chain is WSCD family member GA21586, found in Drosophila pseudoobscura pseudoobscura (Fruit fly).